Consider the following 381-residue polypeptide: Prolargin (381 aa).

The N-terminal stretch at 1 to 21 is a signal peptide; the sequence is MRSSLCWLLTLLLILATAAQG. The segment at 19–65 is disordered; that stretch reads AQGQPTRRPRPRPRPRPRPRLRPTPSFPQPDEPTEPTDLPPPLPPGP. Positions 25-39 are enriched in basic residues; sequence RRPRPRPRPRPRPRL. Pro residues predominate over residues 56-65; the sequence is DLPPPLPPGP. 12 LRR repeats span residues 94–113, 114–137, 138–161, 162–182, 183–206, 207–232, 233–253, 254–277, 278–302, 303–322, 323–361, and 362–381; these read RKVP…NNFI, TELP…NNRI, RKVD…KNQL, EEVP…QNQI, SRIP…HNKL, SDGV…HNTL, RKMP…SNRI, EAIP…YNQL, SDRG…HNRI, SSVP…NNSI, EKIN…GNYL, and KPPI…SVVI. Asparagine 123 carries an N-linked (GlcNAc...) asparagine glycan. N-linked (GlcNAc...) asparagine glycans are attached at residues asparagine 288, asparagine 319, and asparagine 326. Residues cysteine 331 and cysteine 372 are joined by a disulfide bond.

Belongs to the small leucine-rich proteoglycan (SLRP) family. SLRP class II subfamily. In terms of assembly, binds the basement membrane heparan sulfate proteoglycan perlecan and triple helical collagens type I and type II. Post-translationally, glycosylated; contains heparan sulfate.

Its subcellular location is the secreted. The protein localises to the extracellular space. The protein resides in the extracellular matrix. May anchor basement membranes to the underlying connective tissue. The polypeptide is Prolargin (PRELP) (Bos taurus (Bovine)).